We begin with the raw amino-acid sequence, 458 residues long: Argininosuccinate lyase (458 aa).

Belongs to the lyase 1 family. Argininosuccinate lyase subfamily.

It localises to the cytoplasm. The enzyme catalyses 2-(N(omega)-L-arginino)succinate = fumarate + L-arginine. The protein operates within amino-acid biosynthesis; L-arginine biosynthesis; L-arginine from L-ornithine and carbamoyl phosphate: step 3/3. In Pseudoalteromonas atlantica (strain T6c / ATCC BAA-1087), this protein is Argininosuccinate lyase.